A 465-amino-acid chain; its full sequence is Ribulose bisphosphate carboxylase large chain (465 aa).

The residue at position 4 (K4) is an N6,N6,N6-trimethyllysine. Positions 113 and 163 each coordinate substrate. K165 functions as the Proton acceptor in the catalytic mechanism. Substrate is bound at residue K167. The Mg(2+) site is built by K191, D193, and E194. K191 carries the N6-carboxylysine modification. Catalysis depends on H284, which acts as the Proton acceptor. Residues R285, H317, and S369 each coordinate substrate.

It belongs to the RuBisCO large chain family. Type I subfamily. In terms of assembly, heterohexadecamer of 8 large chains and 8 small chains. Mg(2+) is required as a cofactor.

The protein localises to the plastid. It is found in the chloroplast. The enzyme catalyses 2 (2R)-3-phosphoglycerate + 2 H(+) = D-ribulose 1,5-bisphosphate + CO2 + H2O. It carries out the reaction D-ribulose 1,5-bisphosphate + O2 = 2-phosphoglycolate + (2R)-3-phosphoglycerate + 2 H(+). In terms of biological role, ruBisCO catalyzes two reactions: the carboxylation of D-ribulose 1,5-bisphosphate, the primary event in carbon dioxide fixation, as well as the oxidative fragmentation of the pentose substrate in the photorespiration process. Both reactions occur simultaneously and in competition at the same active site. This Sarracenia flava (Yellow pitcher plant) protein is Ribulose bisphosphate carboxylase large chain.